Reading from the N-terminus, the 305-residue chain is Large ribosomal subunit protein uL2m (305 aa).

A mitochondrion-targeting transit peptide spans 1–60 (MALCALTRALRSLNLAPPTVAAPAPSLFPAAQMMNNGLLQQPSALMLLPCRPVLTSVALN). Positions 264 to 283 (RWLGKRPNSGRWHRKGGWAG) are disordered. Basic residues predominate over residues 274 to 283 (RWHRKGGWAG).

It belongs to the universal ribosomal protein uL2 family. Component of the mitochondrial large ribosomal subunit (mt-LSU). Mature mammalian 55S mitochondrial ribosomes consist of a small (28S) and a large (39S) subunit. The 28S small subunit contains a 12S ribosomal RNA (12S mt-rRNA) and 30 different proteins. The 39S large subunit contains a 16S rRNA (16S mt-rRNA), a copy of mitochondrial valine transfer RNA (mt-tRNA(Val)), which plays an integral structural role, and 52 different proteins.

It is found in the mitochondrion. In Homo sapiens (Human), this protein is Large ribosomal subunit protein uL2m (MRPL2).